A 401-amino-acid chain; its full sequence is Argininosuccinate synthase (401 aa).

ATP contacts are provided by residues 10 to 18 (AYSGGLDTS) and A37. Y89 provides a ligand contact to L-citrulline. G119 is an ATP binding site. Positions 121, 125, and 126 each coordinate L-aspartate. Position 125 (N125) interacts with L-citrulline. Positions 129, 178, 187, 263, and 275 each coordinate L-citrulline.

This sequence belongs to the argininosuccinate synthase family. Type 1 subfamily. Homotetramer.

It is found in the cytoplasm. The catalysed reaction is L-citrulline + L-aspartate + ATP = 2-(N(omega)-L-arginino)succinate + AMP + diphosphate + H(+). It participates in amino-acid biosynthesis; L-arginine biosynthesis; L-arginine from L-ornithine and carbamoyl phosphate: step 2/3. The polypeptide is Argininosuccinate synthase (Buchnera aphidicola subsp. Schizaphis graminum (strain Sg)).